Here is a 464-residue protein sequence, read N- to C-terminus: Trehalose-6-phosphate synthase (464 aa).

A D-glucose 6-phosphate-binding site is contributed by Arg-10. 23 to 24 is a UDP-alpha-D-glucose binding site; that stretch reads GG. D-glucose 6-phosphate is bound by residues Tyr-81 and Asp-135. Arg-268 and Lys-273 together coordinate UDP-alpha-D-glucose. A D-glucose 6-phosphate-binding site is contributed by Arg-306. UDP-alpha-D-glucose is bound at residue 371–375; it reads LVAKE.

This sequence belongs to the glycosyltransferase 20 family. Homotetramer.

It catalyses the reaction D-glucose 6-phosphate + UDP-alpha-D-glucose = alpha,alpha-trehalose 6-phosphate + UDP + H(+). It participates in glycan biosynthesis; trehalose biosynthesis. In terms of biological role, probably involved in the osmoprotection via the biosynthesis of trehalose. Catalyzes the transfer of glucose from UDP-alpha-D-glucose (UDP-Glc) to D-glucose 6-phosphate (Glc-6-P) to form trehalose-6-phosphate. Acts with retention of the anomeric configuration of the UDP-sugar donor. This Sinorhizobium fredii (strain NBRC 101917 / NGR234) protein is Trehalose-6-phosphate synthase.